The sequence spans 619 residues: Dihydroxy-acid dehydratase (619 aa).

Asp-81 contacts Mg(2+). Cys-122 provides a ligand contact to [2Fe-2S] cluster. Mg(2+) is bound by residues Asp-123 and Lys-124. At Lys-124 the chain carries N6-carboxylysine. Cys-195 provides a ligand contact to [2Fe-2S] cluster. Glu-494 provides a ligand contact to Mg(2+). Catalysis depends on Ser-520, which acts as the Proton acceptor.

The protein belongs to the IlvD/Edd family. As to quaternary structure, homodimer. Requires [2Fe-2S] cluster as cofactor. Mg(2+) is required as a cofactor.

The enzyme catalyses (2R)-2,3-dihydroxy-3-methylbutanoate = 3-methyl-2-oxobutanoate + H2O. It carries out the reaction (2R,3R)-2,3-dihydroxy-3-methylpentanoate = (S)-3-methyl-2-oxopentanoate + H2O. It functions in the pathway amino-acid biosynthesis; L-isoleucine biosynthesis; L-isoleucine from 2-oxobutanoate: step 3/4. It participates in amino-acid biosynthesis; L-valine biosynthesis; L-valine from pyruvate: step 3/4. Its function is as follows. Functions in the biosynthesis of branched-chain amino acids. Catalyzes the dehydration of (2R,3R)-2,3-dihydroxy-3-methylpentanoate (2,3-dihydroxy-3-methylvalerate) into 2-oxo-3-methylpentanoate (2-oxo-3-methylvalerate) and of (2R)-2,3-dihydroxy-3-methylbutanoate (2,3-dihydroxyisovalerate) into 2-oxo-3-methylbutanoate (2-oxoisovalerate), the penultimate precursor to L-isoleucine and L-valine, respectively. The protein is Dihydroxy-acid dehydratase of Shewanella sp. (strain MR-4).